We begin with the raw amino-acid sequence, 127 residues long: Glycine cleavage system H protein (127 aa).

The Lipoyl-binding domain occupies 24-105 (TLTIGITDLA…AYDAWLFKIK (82 aa)). N6-lipoyllysine is present on Lys65.

The protein belongs to the GcvH family. In terms of assembly, the glycine cleavage system is composed of four proteins: P, T, L and H. It depends on (R)-lipoate as a cofactor.

The glycine cleavage system catalyzes the degradation of glycine. The H protein shuttles the methylamine group of glycine from the P protein to the T protein. The chain is Glycine cleavage system H protein from Ralstonia nicotianae (strain ATCC BAA-1114 / GMI1000) (Ralstonia solanacearum).